Here is a 450-residue protein sequence, read N- to C-terminus: Chromosomal replication initiator protein DnaA (450 aa).

The domain I, interacts with DnaA modulators stretch occupies residues 1–79 (MENIHDLWNR…TGEELLIKFI (79 aa)). Positions 79 to 111 (ITPPNQSEDDFEFQRSSKKHRKPYEESTDFPQS) are domain II. Residues 112-328 (MLNPKYTFDT…GALIRVVAYS (217 aa)) form a domain III, AAA+ region region. ATP contacts are provided by Gly156, Gly158, Lys159, and Thr160. The tract at residues 329–450 (SLINKEITAD…KEIEEKLKQL (122 aa)) is domain IV, binds dsDNA.

Belongs to the DnaA family. In terms of assembly, oligomerizes as a right-handed, spiral filament on DNA at oriC.

The protein resides in the cytoplasm. Functionally, plays an essential role in the initiation and regulation of chromosomal replication. ATP-DnaA binds to the origin of replication (oriC) to initiate formation of the DNA replication initiation complex once per cell cycle. Binds the DnaA box (a 9 base pair repeat at the origin) and separates the double-stranded (ds)DNA. Forms a right-handed helical filament on oriC DNA; dsDNA binds to the exterior of the filament while single-stranded (ss)DNA is stabiized in the filament's interior. The ATP-DnaA-oriC complex binds and stabilizes one strand of the AT-rich DNA unwinding element (DUE), permitting loading of DNA polymerase. After initiation quickly degrades to an ADP-DnaA complex that is not apt for DNA replication. Binds acidic phospholipids. This is Chromosomal replication initiator protein DnaA from Geobacillus sp. (strain WCH70).